The chain runs to 512 residues: Spastin homolog (512 aa).

Over 1–274 (MFAFSKGPAG…FKGLRQPVKG (274 aa)) the chain is Cytoplasmic. A coiled-coil region spans residues 32 to 97 (IEMDELTKHA…MKLEKSAQDR (66 aa)). A disordered region spans residues 110–182 (KQSRSATVGP…SDTVHPEPPV (73 aa)). The tract at residues 115-233 (ATVGPSRPAS…ERLLDEVLDN (119 aa)) is MTBD. Basic and acidic residues predominate over residues 137–163 (APEKKNAAKAKENDENRHVCSRGDRCG). Residues 275-294 (ILLFGPPGNGKTLLAKAVAG) constitute an intramembrane region (helical). 279 to 286 (GPPGNGKT) serves as a coordination point for ATP. Topologically, residues 295–512 (ESKQMFFNIS…LSDFSRSFGC (218 aa)) are cytoplasmic.

It belongs to the AAA ATPase family. Spastin subfamily. As to quaternary structure, homohexamer. The homohexamer is stabilized by ATP-binding. The homohexamer may adopt a ring conformation through which microtubules pass prior to being severed. Interacts with microtubules. Interacts (via N-terminus) with tubulin; the interaction is direct.

It localises to the membrane. The protein localises to the cytoplasm. It is found in the cytoskeleton. The protein resides in the perinuclear region. The catalysed reaction is n ATP + n H2O + a microtubule = n ADP + n phosphate + (n+1) alpha/beta tubulin heterodimers.. Functionally, ATP-dependent microtubule severing protein that specifically recognizes and cuts microtubules. Probably by regulating microtubule remodeling, plays a role in new synapse formation in GABAergic DD (Dorsal D type) neurons. The sequence is that of Spastin homolog from Caenorhabditis elegans.